We begin with the raw amino-acid sequence, 74 residues long: ATP synthase subunit 9, mitochondrial (74 aa).

Helical transmembrane passes span 8-28 (MGAGAATIALAGAAIGIGNVF) and 50-70 (ILGFALTEAIALFALMMAFLI).

It belongs to the ATPase C chain family. In terms of assembly, F-type ATPases have 2 components, CF(1) - the catalytic core - and CF(0) - the membrane proton channel. CF(1) has five subunits: alpha(3), beta(3), gamma(1), delta(1), epsilon(1). CF(0) has three main subunits: a, b and c.

The protein localises to the mitochondrion membrane. Functionally, this protein is one of the chains of the nonenzymatic membrane component (F0) of mitochondrial ATPase. The polypeptide is ATP synthase subunit 9, mitochondrial (ATP9) (Solanum lycopersicum (Tomato)).